Here is a 173-residue protein sequence, read N- to C-terminus: RNA polymerase sigma factor TcsR (173 aa).

The tract at residues 122-169 (IKDLTQNEKNILRKIYLHGLRESEISRELNISRQAVNKTHLRALEKLK) is sigma-70 factor domain-4. Positions 143–162 (ESEISRELNISRQAVNKTHL) form a DNA-binding region, H-T-H motif.

It belongs to the sigma-70 factor family.

Its function is as follows. Sigma factors are initiation factors that promote the attachment of RNA polymerase to specific initiation sites and are then released. Transcriptional regulator specifically required to activate expression of the toxin gene locus, composed of tcsL and tcdE/utxA. The sequence is that of RNA polymerase sigma factor TcsR from Paraclostridium sordellii (Clostridium sordellii).